Reading from the N-terminus, the 171-residue chain is Sec-independent protein translocase protein TatB (171 aa).

A helical transmembrane segment spans residues 1-21; that stretch reads MFDIGFSELLLVFIIGLVVLG. The tract at residues 89–171 is disordered; that stretch reads AESMKRSYVA…APSPSSSDKP (83 aa). The span at 100 to 123 shows a compositional bias: basic and acidic residues; sequence DPEKASDEAHTIHNPVVKDNETAH. Over residues 130–139 the composition is skewed to polar residues; sequence AAQTQASSPE.

It belongs to the TatB family. In terms of assembly, the Tat system comprises two distinct complexes: a TatABC complex, containing multiple copies of TatA, TatB and TatC subunits, and a separate TatA complex, containing only TatA subunits. Substrates initially bind to the TatABC complex, which probably triggers association of the separate TatA complex to form the active translocon.

It is found in the cell inner membrane. Part of the twin-arginine translocation (Tat) system that transports large folded proteins containing a characteristic twin-arginine motif in their signal peptide across membranes. Together with TatC, TatB is part of a receptor directly interacting with Tat signal peptides. TatB may form an oligomeric binding site that transiently accommodates folded Tat precursor proteins before their translocation. The chain is Sec-independent protein translocase protein TatB from Escherichia coli O1:K1 / APEC.